The chain runs to 208 residues: MMRPILIGITGGTGSGKSTVANEIYESFKDDCIAIIEQDSYYKDQSHLTFEDRIKTNYDHPNAFDTELLVEHLKELSKGNTINKPIYDFKEHTRKKEVVEVKAKDIIIVEGIMILQDVELRNLLDIKIYVDTDDDVRIIRRILRDIKERGRTIDSVVDQYLGVVKPMHSQFIEPTKKYADIIIPEGGQNKVAIDIMVSKIKQILSENK.

Residue 11–18 coordinates ATP; the sequence is GGTGSGKS.

It belongs to the uridine kinase family.

The protein resides in the cytoplasm. It carries out the reaction uridine + ATP = UMP + ADP + H(+). The enzyme catalyses cytidine + ATP = CMP + ADP + H(+). The protein operates within pyrimidine metabolism; CTP biosynthesis via salvage pathway; CTP from cytidine: step 1/3. It functions in the pathway pyrimidine metabolism; UMP biosynthesis via salvage pathway; UMP from uridine: step 1/1. The chain is Uridine kinase from Clostridium novyi (strain NT).